Reading from the N-terminus, the 255-residue chain is Zinc-finger homeodomain protein 6 (255 aa).

The interval 1–35 is disordered; it reads MEFRGHDEPVDEMGVAYGRTPPSSSSSPAASASAG. The segment covering 21 to 35 has biased composition (low complexity); the sequence is PPSSSSSPAASASAG. Residues 45-93 form a ZF-HD dimerization-type; degenerate zinc finger; the sequence is YHECLRNHAAAMGGHVVDGCREFMPMPGDAADALKCAACGCHRSFHRKD. Positions 106 to 126 are enriched in pro residues; that stretch reads PSPPTPRVPLLMPPPQPQPHP. 2 disordered regions span residues 106-181 and 226-255; these read PSPP…KFTP and NNKS…QQQQ. Residues 139-153 are compositionally biased toward low complexity; the sequence is YHHTPSGSGGTTTES. Residues 172-235 constitute a DNA-binding region (homeobox); the sequence is RKRFRTKFTP…NNKSSIGSSS (64 aa). Residues 240–255 show a composition bias toward low complexity; it reads RRQPQEQQSQQQQQQQ.

As to quaternary structure, homo- and heterodimer with other ZFHD proteins.

It is found in the nucleus. Its function is as follows. Putative transcription factor. This chain is Zinc-finger homeodomain protein 6 (ZHD6), found in Oryza sativa subsp. japonica (Rice).